A 429-amino-acid chain; its full sequence is Histidine--tRNA ligase (429 aa).

It belongs to the class-II aminoacyl-tRNA synthetase family. In terms of assembly, homodimer.

It is found in the cytoplasm. The catalysed reaction is tRNA(His) + L-histidine + ATP = L-histidyl-tRNA(His) + AMP + diphosphate + H(+). This Streptococcus pneumoniae (strain P1031) protein is Histidine--tRNA ligase.